The following is a 470-amino-acid chain: Nuclear receptor subfamily 0 group B member 1 (470 aa).

A run of 3 repeats spans residues methionine 1–cysteine 67, phenylalanine 68–cysteine 133, and phenylalanine 134–cysteine 200. Residues methionine 1–valine 253 form a 4 X 67 AA tandem repeats region. 3 short sequence motifs (LXXLL motif) span residues leucine 13–leucine 17, leucine 80–leucine 84, and leucine 146–leucine 150. Residues phenylalanine 201–valine 253 form a 4; truncated repeat. An NR LBD domain is found at aspartate 205–lysine 469. Positions methionine 461 to leucine 466 match the AF-2 motif motif.

The protein belongs to the nuclear hormone receptor family. NR0 subfamily. As to quaternary structure, homodimer. Interacts with NR5A1, NR5A2, NR0B2 and with COPS2. Interacts with ESRRB; represses ESRRB activity at the GATA6 promoter.

It is found in the nucleus. Its subcellular location is the cytoplasm. Its function is as follows. Nuclear receptor that lacks a DNA-binding domain and acts as a corepressor that inhibits the transcriptional activity of other nuclear receptors through heterodimeric interactions. Component of a cascade required for the development of the hypothalamic-pituitary-adrenal-gonadal axis. May also have a role in the development of the embryo and in the maintenance of embryonic stem cell pluripotency. In Pan troglodytes (Chimpanzee), this protein is Nuclear receptor subfamily 0 group B member 1 (NR0B1).